The primary structure comprises 306 residues: Curved DNA-binding protein (306 aa).

The J domain maps to 5 to 69 (DYYAIMGVKP…QRRAEYDQMW (65 aa)).

Its subcellular location is the cytoplasm. The protein localises to the nucleoid. Functionally, DNA-binding protein that preferentially recognizes a curved DNA sequence. It is probably a functional analog of DnaJ; displays overlapping activities with DnaJ, but functions under different conditions, probably acting as a molecular chaperone in an adaptive response to environmental stresses other than heat shock. Lacks autonomous chaperone activity; binds native substrates and targets them for recognition by DnaK. Its activity is inhibited by the binding of CbpM. This chain is Curved DNA-binding protein, found in Escherichia coli O17:K52:H18 (strain UMN026 / ExPEC).